We begin with the raw amino-acid sequence, 274 residues long: Undecaprenyl-diphosphatase (274 aa).

Helical transmembrane passes span 40–60 (PGAA…LMFF), 90–110 (WFII…KDVI), 114–134 (FRSL…LGVA), 147–167 (ISLR…IPGV), 190–210 (YAFL…LKDI), 221–241 (PTIV…AWLL), and 252–272 (FVLY…TGVI).

It belongs to the UppP family.

It is found in the cell membrane. The catalysed reaction is di-trans,octa-cis-undecaprenyl diphosphate + H2O = di-trans,octa-cis-undecaprenyl phosphate + phosphate + H(+). In terms of biological role, catalyzes the dephosphorylation of undecaprenyl diphosphate (UPP). Confers resistance to bacitracin. The protein is Undecaprenyl-diphosphatase of Nocardioides sp. (strain ATCC BAA-499 / JS614).